The sequence spans 478 residues: MSQKFDVVVIGAGPGGYVAAIRAAQLGLKTACIEKYIGKEGKVALGGTCLNVGCIPSKALLDSSYKYHEAKEAFKVHGIEAKGVTIDVPAMVARKANIVKNLTGGIATLFKANGVTSFEGHGKLLANKQVEVTGLDGKTQVLEAENVIIASGSRPVEIPPAPLSDDIIVDSTGALEFQAVPKKLGVIGAGVIGLELGSVWARLGAEVTVLEALDKFLPAADEQIAKEALKVLTKQGLNIRLGARVTASEVKKKQVTVTFTDANGEQKETFDKLIVAVGRRPVTTDLLAADSGVTLDERGFIYVDDHCKTSVPGVFAIGDVVRGAMLAHKASEEGVMVAERIAGHKAQMNYDLIPSVIYTHPEIAWVGKTEQTLKAEGVEVNVGTFPFAASGRAMAANDTTGLVKVIADAKTDRVLGVHVIGPSAAELVQQGAIGMEFGTSAEDLGMMVFSHPTLSEALHEAALAVNGHAIHIANRKKR.

FAD contacts are provided by residues 34–49, K58, and G122; that span reads EKYIGKEGKVALGGTC. C49 and C54 form a disulfide bridge. NAD(+) is bound by residues 188 to 192, E211, V245, and 276 to 279; these read GAGVI and AVGR. 2 residues coordinate FAD: D319 and A327. Catalysis depends on H451, which acts as the Proton acceptor.

Belongs to the class-I pyridine nucleotide-disulfide oxidoreductase family. Homodimer. It depends on FAD as a cofactor.

The protein localises to the cytoplasm. It carries out the reaction N(6)-[(R)-dihydrolipoyl]-L-lysyl-[protein] + NAD(+) = N(6)-[(R)-lipoyl]-L-lysyl-[protein] + NADH + H(+). Functionally, the branched-chain alpha-keto dehydrogenase complex catalyzes the overall conversion of alpha-keto acids to acyl-CoA and CO(2). It contains multiple copies of 3 enzymatic components: branched-chain alpha-keto acid decarboxylase (E1), lipoamide acyltransferase (E2) and lipoamide dehydrogenase (E3). This is Dihydrolipoyl dehydrogenase (lpd) from Pseudomonas fluorescens.